An 88-amino-acid chain; its full sequence is Small ribosomal subunit protein uS15c (88 aa).

The protein belongs to the universal ribosomal protein uS15 family. As to quaternary structure, part of the 30S ribosomal subunit.

The protein resides in the plastid. Its subcellular location is the chloroplast. This Aethionema grandiflorum (Persian stone-cress) protein is Small ribosomal subunit protein uS15c (rps15).